Here is a 372-residue protein sequence, read N- to C-terminus: Peroxisomal biogenesis factor 3 (372 aa).

At 1 to 15 the chain is on the cytoplasmic side; that stretch reads MLRSMWNFLKRHKKK. Residues 1–45 form a targeting to peroxisomes region; sequence MLRSMWNFLKRHKKKCIFLGTVLGGVYILGKYGQKKLREIQEREA. The chain crosses the membrane as a helical span at residues 16-36; sequence CIFLGTVLGGVYILGKYGQKK. The Peroxisomal segment spans residues 37–116; that stretch reads LREIQEREAA…LKIISFTRSI (80 aa). Residues 117 to 140 form a helical membrane-spanning segment; it reads VAVYSTCMLVVLLRVQLNIIGGYI. Residues 120–136 are interaction with PEX19; it reads YSTCMLVVLLRVQLNII. The Cytoplasmic portion of the chain corresponds to 141–372; the sequence is YLDNATVGKN…AFSTPQQLEK (232 aa).

This sequence belongs to the peroxin-3 family. Interacts with PEX19.

The protein resides in the peroxisome membrane. Involved in peroxisome biosynthesis and integrity. Assembles membrane vesicles before the matrix proteins are translocated. As a docking factor for PEX19, is necessary for the import of peroxisomal membrane proteins in the peroxisomes. This Rattus norvegicus (Rat) protein is Peroxisomal biogenesis factor 3 (Pex3).